Reading from the N-terminus, the 83-residue chain is Large ribosomal subunit protein bL27 (83 aa).

The disordered stretch occupies residues 1–21 (MAHKRSSGAGRNGRDSNPKYL).

It belongs to the bacterial ribosomal protein bL27 family.

This chain is Large ribosomal subunit protein bL27, found in Kosmotoga olearia (strain ATCC BAA-1733 / DSM 21960 / TBF 19.5.1).